The following is a 381-amino-acid chain: Selenoprotein P (381 aa).

A signal peptide spans 1–19 (MWRSLGLALALCLLPSGGT). The N-linked (GlcNAc...) asparagine glycan is linked to Asn-46. A non-standard amino acid (selenocysteine) is located at residue Sec-59. Residue Asn-83 is glycosylated (N-linked (GlcNAc...) (complex) asparagine). N-linked (GlcNAc...) asparagine glycans are attached at residues Asn-119, Asn-128, and Asn-174. A disordered region spans residues 200–268 (TPSPHYHHEH…ENRDMPASED (69 aa)). Residues 204–216 (HYHHEHHHNHGHQ) show a composition bias toward basic residues. Positions 218-230 (LGSSELSENQQPG) are enriched in polar residues. Positions 243–255 (LHHHHKHKGQHRQ) are enriched in basic residues. Ser-266 carries the post-translational modification Phosphoserine. Residues Sec-300, Sec-318, and Sec-330 are each a non-standard amino acid (selenocysteine). Asn-338 is a glycosylation site (N-linked (GlcNAc...) asparagine). 6 non-standard amino acids (selenocysteine) are found at residues Sec-345, Sec-352, Sec-367, Sec-369, Sec-376, and Sec-378. Residues 355–381 (SQQLIPTEASASURUKNQAKKUEUPSN) are disordered.

This sequence belongs to the selenoprotein P family. Phosphorylation sites are present in the extracellular medium. Made in the liver and heart and secreted into the plasma. It is also found in the kidney.

It is found in the secreted. In terms of biological role, might be responsible for some of the extracellular antioxidant defense properties of selenium or might be involved in the transport of selenium. May supply selenium to tissues such as brain and testis. In Homo sapiens (Human), this protein is Selenoprotein P.